A 153-amino-acid chain; its full sequence is Putative tRNA (cytidine(34)-2'-O)-methyltransferase (153 aa).

Residues glycine 102, isoleucine 122, and serine 131 each coordinate S-adenosyl-L-methionine.

The protein belongs to the class IV-like SAM-binding methyltransferase superfamily. RNA methyltransferase TrmH family. TrmL subfamily.

The protein localises to the cytoplasm. The catalysed reaction is cytidine(34) in tRNA + S-adenosyl-L-methionine = 2'-O-methylcytidine(34) in tRNA + S-adenosyl-L-homocysteine + H(+). It catalyses the reaction 5-carboxymethylaminomethyluridine(34) in tRNA(Leu) + S-adenosyl-L-methionine = 5-carboxymethylaminomethyl-2'-O-methyluridine(34) in tRNA(Leu) + S-adenosyl-L-homocysteine + H(+). In terms of biological role, could methylate the ribose at the nucleotide 34 wobble position in tRNA. The polypeptide is Putative tRNA (cytidine(34)-2'-O)-methyltransferase (Synechocystis sp. (strain ATCC 27184 / PCC 6803 / Kazusa)).